Here is a 368-residue protein sequence, read N- to C-terminus: Spermidine/putrescine import ATP-binding protein PotA (368 aa).

Residues 8 to 238 (IELRGVTKNF…PANLYVARFV (231 aa)) form the ABC transporter domain. An ATP-binding site is contributed by 40–47 (GPSGCGKT).

The protein belongs to the ABC transporter superfamily. Spermidine/putrescine importer (TC 3.A.1.11.1) family. In terms of assembly, the complex is composed of two ATP-binding proteins (PotA), two transmembrane proteins (PotB and PotC) and a solute-binding protein (PotD).

The protein resides in the cell inner membrane. The catalysed reaction is ATP + H2O + polyamine-[polyamine-binding protein]Side 1 = ADP + phosphate + polyamineSide 2 + [polyamine-binding protein]Side 1.. Functionally, part of the ABC transporter complex PotABCD involved in spermidine/putrescine import. Responsible for energy coupling to the transport system. The chain is Spermidine/putrescine import ATP-binding protein PotA from Nitratidesulfovibrio vulgaris (strain ATCC 29579 / DSM 644 / CCUG 34227 / NCIMB 8303 / VKM B-1760 / Hildenborough) (Desulfovibrio vulgaris).